The sequence spans 151 residues: Large ribosomal subunit protein uL13 (151 aa).

The protein belongs to the universal ribosomal protein uL13 family. Part of the 50S ribosomal subunit.

This protein is one of the early assembly proteins of the 50S ribosomal subunit, although it is not seen to bind rRNA by itself. It is important during the early stages of 50S assembly. The chain is Large ribosomal subunit protein uL13 from Acaryochloris marina (strain MBIC 11017).